The chain runs to 175 residues: Nucleoside diphosphate kinase 6 (175 aa).

Positions 15, 63, 91, 97, 111, and 121 each coordinate ATP. The active-site Pros-phosphohistidine intermediate is His-124.

The protein belongs to the NDK family. Mg(2+) serves as cofactor.

It carries out the reaction a 2'-deoxyribonucleoside 5'-diphosphate + ATP = a 2'-deoxyribonucleoside 5'-triphosphate + ADP. The enzyme catalyses a ribonucleoside 5'-diphosphate + ATP = a ribonucleoside 5'-triphosphate + ADP. Its function is as follows. Major role in the synthesis of nucleoside triphosphates other than ATP. The ATP gamma phosphate is transferred to the NDP beta phosphate via a ping-pong mechanism, using a phosphorylated active-site intermediate. The polypeptide is Nucleoside diphosphate kinase 6 (nme6) (Danio rerio (Zebrafish)).